The sequence spans 637 residues: Chaperone protein HtpG (637 aa).

An a; substrate-binding region spans residues 1–345 (MSQQETHGFQ…SNDLPLNVSR (345 aa)). The interval 346-562 (EILQDNHVTK…EGEMSTQMIK (217 aa)) is b. A c region spans residues 563 to 637 (LMQAAGQPVP…MNQMLLANMK (75 aa)).

Belongs to the heat shock protein 90 family. Homodimer.

Its subcellular location is the cytoplasm. Functionally, molecular chaperone. Has ATPase activity. The polypeptide is Chaperone protein HtpG (Shewanella baltica (strain OS185)).